Consider the following 216-residue polypeptide: MFAQDAAQTGEQTTQNQGENGNNFVTEAITNYLIDDFEFANTWQASMPRDYGVVSIIRREGGPADVVAEGAENNKYILGAKVEYFRTGYPWFSVTPPRPVKIPGYTKELSVWVAGRNHNNRMSFYVYDVNGKPQAVGNEALNFMGWKNITVQIPANIRQEEFRGQVEQGISFMGIHVKVDPRDSYGKYYIYFDQLMAKTDMYLETYREEDDPLDTW.

A disordered region spans residues 1–22 (MFAQDAAQTGEQTTQNQGENGN). Residues 8–22 (QTGEQTTQNQGENGN) are compositionally biased toward low complexity.

It is found in the periplasmic flagellum. Its subcellular location is the periplasm. Its function is as follows. Might be part of the flagella. This chain is Putative flagellar filament outer layer-like protein (flaAL), found in Brachyspira hyodysenteriae (strain ATCC 49526 / WA1).